Consider the following 747-residue polypeptide: Probable cyclic nucleotide-gated ion channel 6 (747 aa).

Over 1–117 the chain is Cytoplasmic; that stretch reads MFDTCGPKGV…DKFLLLCNKL (117 aa). A helical membrane pass occupies residues 118–138; that stretch reads FVASCILAVSVDPLFLYLPFI. Topologically, residues 139–150 are extracellular; that stretch reads NDKAKCVGIDRK. A helical membrane pass occupies residues 151-171; that stretch reads LAIIVTTIRTVIDSFYLFHMA. Residues 172–205 are Cytoplasmic-facing; sequence LRFRTAYVAPSSRVFGRGELVIDPAQIAKRYLQQ. Residues 206 to 226 traverse the membrane as a helical segment; sequence YFIIDLLSVLPVPQIIVWRFL. The Extracellular segment spans residues 227-239; it reads YTSRGANVLATKQ. Residues 240-260 form a helical membrane-spanning segment; the sequence is ALRYIVLVQYIPRFLRMYPLS. The Cytoplasmic segment spans residues 261-280; it reads SELKRTAGVFAETAWAGAAY. Residues 281 to 301 form a helical membrane-spanning segment; sequence YLLLYMLASHIVGALWYLLAL. Topologically, residues 302–407 are extracellular; the sequence is ERNNDCWSKA…GQGLETSTYP (106 aa). Residues 408 to 428 form a helical membrane-spanning segment; that stretch reads GEVIFSITLAIAGLLLFALLI. The Cytoplasmic portion of the chain corresponds to 429–747; sequence GNMQTYLQSL…PEPDFSAEDH (319 aa). Residues 514 to 638 and Asp585 contribute to the a nucleoside 3',5'-cyclic phosphate site; that span reads LFEN…SRQV. The interval 630–645 is calmodulin-binding; the sequence is FRRLHSRQVQHTFRFY. The IQ domain maps to 650-679; it reads RTWAACFMQAAWRRYIKRKKLEQLRKEEEE.

It belongs to the cyclic nucleotide-gated cation channel (TC 1.A.1.5) family. As to quaternary structure, homotetramer or heterotetramer.

The protein resides in the cell membrane. Probable cyclic nucleotide-gated ion channel. The sequence is that of Probable cyclic nucleotide-gated ion channel 6 (CNGC6) from Arabidopsis thaliana (Mouse-ear cress).